The primary structure comprises 1133 residues: Trafficking protein particle complex subunit 11 (1133 aa).

N6-acetyllysine is present on Lys245.

It belongs to the TRAPPC11 family. In terms of assembly, component of the multisubunit TRAPP (transport protein particle) complex, which includes at least TRAPPC2, TRAPPC2L, TRAPPC3, TRAPPC3L, TRAPPC4, TRAPPC5, TRAPPC8, TRAPPC9, TRAPPC10, TRAPPC11 and TRAPPC12.

Its subcellular location is the golgi apparatus. It is found in the cis-Golgi network. Functionally, involved in endoplasmic reticulum to Golgi apparatus trafficking at a very early stage. This is Trafficking protein particle complex subunit 11 (TRAPPC11) from Bos taurus (Bovine).